Reading from the N-terminus, the 202-residue chain is HTH-type transcriptional regulator BetI 1 (202 aa).

Residues 8-68 form the HTH tetR-type domain; sequence PIRRRQLIQA…SAMRQILWDL (61 aa). Residues 31 to 50 constitute a DNA-binding region (H-T-H motif); that stretch reads TIARIAKRAGVSAGIISHYF.

The protein operates within amine and polyamine biosynthesis; betaine biosynthesis via choline pathway [regulation]. Repressor involved in the biosynthesis of the osmoprotectant glycine betaine. It represses transcription of the choline transporter BetT and the genes of BetAB involved in the synthesis of glycine betaine. The polypeptide is HTH-type transcriptional regulator BetI 1 (Chromohalobacter salexigens (strain ATCC BAA-138 / DSM 3043 / CIP 106854 / NCIMB 13768 / 1H11)).